The chain runs to 199 residues: NAD(P)H dehydrogenase (quinone) (199 aa).

The Flavodoxin-like domain maps to 4–190; the sequence is VLVLYYSTYG…AGARHQGELV (187 aa). Residues 10–15 and 78–80 contribute to the FMN site; these read STYGHL and TRF. Residue Tyr12 coordinates NAD(+). Trp98 serves as a coordination point for substrate. Residues 113–119 and His134 each bind FMN; that span reads STATQHG.

The protein belongs to the WrbA family. The cofactor is FMN.

It catalyses the reaction a quinone + NADH + H(+) = a quinol + NAD(+). The catalysed reaction is a quinone + NADPH + H(+) = a quinol + NADP(+). The chain is NAD(P)H dehydrogenase (quinone) from Azorhizobium caulinodans (strain ATCC 43989 / DSM 5975 / JCM 20966 / LMG 6465 / NBRC 14845 / NCIMB 13405 / ORS 571).